Consider the following 340-residue polypeptide: DNA-directed RNA polymerase subunit alpha (340 aa).

The alpha N-terminal domain (alpha-NTD) stretch occupies residues 1-236 (MLSLSKNWNT…EQLQLFISFE (236 aa)). Residues 251-340 (FSPYLLKRVD…LSKRYEDSYN (90 aa)) form an alpha C-terminal domain (alpha-CTD) region.

This sequence belongs to the RNA polymerase alpha chain family. Homodimer. The RNAP catalytic core consists of 2 alpha, 1 beta, 1 beta' and 1 omega subunit. When a sigma factor is associated with the core the holoenzyme is formed, which can initiate transcription.

It carries out the reaction RNA(n) + a ribonucleoside 5'-triphosphate = RNA(n+1) + diphosphate. DNA-dependent RNA polymerase catalyzes the transcription of DNA into RNA using the four ribonucleoside triphosphates as substrates. In Rickettsia akari (strain Hartford), this protein is DNA-directed RNA polymerase subunit alpha.